Reading from the N-terminus, the 417-residue chain is Serine hydroxymethyltransferase (417 aa).

Residues Leu121 and 125-127 (GHL) each bind (6S)-5,6,7,8-tetrahydrofolate. The residue at position 229 (Lys229) is an N6-(pyridoxal phosphate)lysine. 355-357 (SPF) is a (6S)-5,6,7,8-tetrahydrofolate binding site.

The protein belongs to the SHMT family. As to quaternary structure, homodimer. Pyridoxal 5'-phosphate is required as a cofactor.

It localises to the cytoplasm. It catalyses the reaction (6R)-5,10-methylene-5,6,7,8-tetrahydrofolate + glycine + H2O = (6S)-5,6,7,8-tetrahydrofolate + L-serine. Its pathway is one-carbon metabolism; tetrahydrofolate interconversion. It functions in the pathway amino-acid biosynthesis; glycine biosynthesis; glycine from L-serine: step 1/1. Functionally, catalyzes the reversible interconversion of serine and glycine with tetrahydrofolate (THF) serving as the one-carbon carrier. This reaction serves as the major source of one-carbon groups required for the biosynthesis of purines, thymidylate, methionine, and other important biomolecules. Also exhibits THF-independent aldolase activity toward beta-hydroxyamino acids, producing glycine and aldehydes, via a retro-aldol mechanism. The sequence is that of Serine hydroxymethyltransferase from Stenotrophomonas maltophilia (strain K279a).